A 147-amino-acid chain; its full sequence is Myoglobin (147 aa).

Positions 2 to 141 (ADFDMVLKCW…IIADMEADYK (140 aa)) constitute a Globin domain. Residue histidine 60 participates in nitrite binding. Histidine 60 serves as a coordination point for O2. Histidine 89 contributes to the heme b binding site.

The protein belongs to the globin family. Monomeric.

Its subcellular location is the cytoplasm. It localises to the sarcoplasm. The catalysed reaction is Fe(III)-heme b-[protein] + nitric oxide + H2O = Fe(II)-heme b-[protein] + nitrite + 2 H(+). The enzyme catalyses H2O2 + AH2 = A + 2 H2O. Functionally, monomeric heme protein which primary function is to store oxygen and facilitate its diffusion within muscle tissues. Reversibly binds oxygen through a pentacoordinated heme iron and enables its timely and efficient release as needed during periods of heightened demand. Depending on the oxidative conditions of tissues and cells, and in addition to its ability to bind oxygen, it also has a nitrite reductase activity whereby it regulates the production of bioactive nitric oxide. Under stress conditions, like hypoxia and anoxia, it also protects cells against reactive oxygen species thanks to its pseudoperoxidase activity. The chain is Myoglobin (mb) from Gobionotothen gibberifrons (Humped rockcod).